Reading from the N-terminus, the 155-residue chain is Small ribosomal subunit protein uS7 (155 aa).

It belongs to the universal ribosomal protein uS7 family. Part of the 30S ribosomal subunit. Contacts proteins S9 and S11.

In terms of biological role, one of the primary rRNA binding proteins, it binds directly to 16S rRNA where it nucleates assembly of the head domain of the 30S subunit. Is located at the subunit interface close to the decoding center, probably blocks exit of the E-site tRNA. This chain is Small ribosomal subunit protein uS7, found in Nautilia profundicola (strain ATCC BAA-1463 / DSM 18972 / AmH).